The chain runs to 253 residues: Tetraspanin-3 (253 aa).

Over 1-11 (MGQCGITSSKT) the chain is Cytoplasmic. The helical transmembrane segment at 12 to 32 (VLVFLNLIFWGAAGILCYVGA) threads the bilayer. Residues 33–50 (YVFITYDDYDHFFEDVYT) are Extracellular-facing. A helical membrane pass occupies residues 51 to 71 (LFPAVVIIAVGALLFIIGLIG). Over 72–85 (CCATIRESRCGLAT) the chain is Cytoplasmic. The helical transmembrane segment at 86–106 (FVFILLLVFVTEVVVVVLGYV) threads the bilayer. Residues 107 to 212 (YRAKVENEVD…KKLQEILMHV (106 aa)) lie on the Extracellular side of the membrane. N-linked (GlcNAc...) asparagine glycosylation is found at Asn-127, Asn-152, Asn-167, and Asn-183. A helical membrane pass occupies residues 213-233 (IWAALAFAAIQLLGMLCACIV). Topologically, residues 234–253 (LCRRSRDPAYELLITGGTYA) are cytoplasmic.

The protein belongs to the tetraspanin (TM4SF) family. In terms of assembly, interacts with claudin-11/CLDN11 and integrins.

The protein resides in the membrane. Functionally, regulates the proliferation and migration of oligodendrocytes, a process essential for normal myelination and repair. This Mus musculus (Mouse) protein is Tetraspanin-3 (Tspan3).